Consider the following 619-residue polypeptide: Putative zinc metalloprotease CT_072 (619 aa).

H20 provides a ligand contact to Zn(2+). Residue E21 is part of the active site. Residue H24 coordinates Zn(2+). 3 consecutive transmembrane segments (helical) span residues 103 to 125 (IFVLAAGPLANLLVAIFVFGILY), 558 to 580 (VLNLLPIPVLDGGYILLCLWEIL), and 593 to 610 (ALVPFMILLVLFFVFLTL).

This sequence belongs to the peptidase M50B family. The cofactor is Zn(2+).

The protein localises to the cell inner membrane. This is Putative zinc metalloprotease CT_072 from Chlamydia trachomatis serovar D (strain ATCC VR-885 / DSM 19411 / UW-3/Cx).